The following is a 177-amino-acid chain: Large ribosomal subunit protein uL6 (177 aa).

It belongs to the universal ribosomal protein uL6 family. In terms of assembly, part of the 50S ribosomal subunit.

This protein binds to the 23S rRNA, and is important in its secondary structure. It is located near the subunit interface in the base of the L7/L12 stalk, and near the tRNA binding site of the peptidyltransferase center. The polypeptide is Large ribosomal subunit protein uL6 (Bartonella henselae (strain ATCC 49882 / DSM 28221 / CCUG 30454 / Houston 1) (Rochalimaea henselae)).